Reading from the N-terminus, the 496-residue chain is Ribose import ATP-binding protein RbsA (496 aa).

ABC transporter domains lie at 5 to 241 and 252 to 496; these read LQMK…VGRE and SPGE…VGGE. Position 37 to 44 (37 to 44) interacts with ATP; that stretch reads GENGAGKS.

This sequence belongs to the ABC transporter superfamily. Ribose importer (TC 3.A.1.2.1) family. As to quaternary structure, the complex is composed of an ATP-binding protein (RbsA), two transmembrane proteins (RbsC) and a solute-binding protein (RbsB).

The protein localises to the cell membrane. The enzyme catalyses D-ribose(out) + ATP + H2O = D-ribose(in) + ADP + phosphate + H(+). Its function is as follows. Part of the ABC transporter complex RbsABC involved in ribose import. Responsible for energy coupling to the transport system. In Caldanaerobacter subterraneus subsp. tengcongensis (strain DSM 15242 / JCM 11007 / NBRC 100824 / MB4) (Thermoanaerobacter tengcongensis), this protein is Ribose import ATP-binding protein RbsA.